A 377-amino-acid polypeptide reads, in one-letter code: Apelin receptor (377 aa).

The Extracellular portion of the chain corresponds to 1 to 28 (MEDDGYNYYGADNQSECDYADWKPSGAL). N-linked (GlcNAc...) asparagine glycosylation occurs at N13. Disulfide bonds link C17-C279 and C100-C179. The helical transmembrane segment at 29–52 (IPAIYMLVFLLGTTGNGLVLWTVF) threads the bilayer. The Cytoplasmic portion of the chain corresponds to 53–62 (RTSREKRRSA). A helical membrane pass occupies residues 63–84 (DIFIASLAVADLTFVVTLPLWA). Over 85-97 (TYTYREFDWPFGT) the chain is Extracellular. A helical transmembrane segment spans residues 98–123 (FSCKLSSYLIFVNMYASVFCLTGLSF). At 124–144 (DRYLAIVRPVANARLRLRVSG) the chain is on the cytoplasmic side. Residues 145-162 (AVATAVLWVLAALLAVPV) form a helical membrane-spanning segment. The Extracellular portion of the chain corresponds to 163–196 (MVFRSTDASENGTKIQCYMDYSMVATSNSEWAWE). A glycan (N-linked (GlcNAc...) asparagine) is linked at N173. Residues 197 to 221 (VGLGVSSTAVGFVVPFTIMLTCYFF) traverse the membrane as a helical segment. Topologically, residues 222–244 (IAQTIAGHFRKERIEGLRKRRRL) are cytoplasmic. A helical transmembrane segment spans residues 245 to 268 (LSIIVVLVVTFALCWMPYHLVKTL). Residues 269 to 287 (YMLGSLLHWPCDFDIFLMN) are Extracellular-facing. A helical membrane pass occupies residues 288–310 (VFPYCTCISYVNSCLNPFLYAFF). The Cytoplasmic segment spans residues 311-377 (DPRFRQACTS…IPYSQETLVD (67 aa)). A disordered region spans residues 334–377 (HSSSAEKSASYSSGHSQGPGPNMGKGGEQMHEKSIPYSQETLVD). Positions 335-349 (SSSAEKSASYSSGHS) are enriched in low complexity.

Belongs to the G-protein coupled receptor 1 family. Homodimer; dimerization inhibits APLNR-mediated G protein and beta-arrestin signaling pathways compared to monomeric APLNR. Expressed in coronary endothelial cells (at protein level). Expressed in the embryo, allantoic and endothelial precursor cells of the yolk sac at 8 days post-coitum (dpc). Expressed in the secondary heart field and somite at 8.25 dpc. Expressed in fetal allantoic endothelial cells at 9 dpc. Expressed in the allantoid and the invading fetal vasculature of the placenta at 9.5 dpc. Expressed in endothelial cells adjacent to syncytiotrophoblast cells at 10.5 dpc. Expressed weakly in the embryonic heart at 11.5 dpc. Expressed in the adult heart. Expressed in endothelial cells and cardiomyocytes and weakly expressed in fibroblasts.

The protein resides in the cell membrane. G protein-coupled receptor for peptide hormones apelin (APLN) and apelin receptor early endogenous ligand (APELA), that plays a role in the regulation of normal cardiovascular function and fluid homeostasis. When acting as apelin receptor, activates both G(i) protein pathway that inhibits adenylate cyclase activity, and the beta-arrestin pathway leading to internalization of the receptor. APLNR/APJ receptor is also activated by mechanical strech in a G-protein-independent fashion to induce beta-arrestin signaling leading to cardiac hypertrophy. However, the presence of apelin ligand blunts cardiac hypertrophic induction from APLNR/APJ on response to pathological stimuli. Plays a key role in early development such as gastrulation, blood vessels formation and heart morphogenesis by acting as a receptor for APELA hormone. May promote angioblast migration toward the embryonic midline, i.e. the position of the future vessel formation, during vasculogenesis. Promotes sinus venosus (SV)-derived endothelial cells migration into the developing heart to promote coronary blood vessel development. Also plays a role in various processes in adults such as regulation of blood vessel formation, blood pressure and heart contractility and protection from cardiac hypertrophy and heart failure. This Mus musculus (Mouse) protein is Apelin receptor.